The following is a 169-amino-acid chain: Transcription antitermination protein NusB (169 aa).

Belongs to the NusB family.

Involved in transcription antitermination. Required for transcription of ribosomal RNA (rRNA) genes. Binds specifically to the boxA antiterminator sequence of the ribosomal RNA (rrn) operons. The polypeptide is Transcription antitermination protein NusB (Rhodococcus opacus (strain B4)).